The primary structure comprises 283 residues: ATP phosphoribosyltransferase (283 aa).

It belongs to the ATP phosphoribosyltransferase family. Long subfamily. The cofactor is Mg(2+).

Its subcellular location is the cytoplasm. The catalysed reaction is 1-(5-phospho-beta-D-ribosyl)-ATP + diphosphate = 5-phospho-alpha-D-ribose 1-diphosphate + ATP. Its pathway is amino-acid biosynthesis; L-histidine biosynthesis; L-histidine from 5-phospho-alpha-D-ribose 1-diphosphate: step 1/9. With respect to regulation, feedback inhibited by histidine. In terms of biological role, catalyzes the condensation of ATP and 5-phosphoribose 1-diphosphate to form N'-(5'-phosphoribosyl)-ATP (PR-ATP). Has a crucial role in the pathway because the rate of histidine biosynthesis seems to be controlled primarily by regulation of HisG enzymatic activity. This is ATP phosphoribosyltransferase from Salinibacter ruber (strain DSM 13855 / M31).